Reading from the N-terminus, the 231-residue chain is Lipoprotein-releasing system ATP-binding protein LolD (231 aa).

In terms of domain architecture, ABC transporter spans 6-230 (LSCKNVSKKY…DGELELVINS (225 aa)). 42-49 (GLSGSGKT) contributes to the ATP binding site.

Belongs to the ABC transporter superfamily. Lipoprotein translocase (TC 3.A.1.125) family. As to quaternary structure, the complex is composed of two ATP-binding proteins (LolD) and two transmembrane proteins (LolC and LolE).

It localises to the cell inner membrane. In terms of biological role, part of the ABC transporter complex LolCDE involved in the translocation of mature outer membrane-directed lipoproteins, from the inner membrane to the periplasmic chaperone, LolA. Responsible for the formation of the LolA-lipoprotein complex in an ATP-dependent manner. In Francisella tularensis subsp. tularensis (strain FSC 198), this protein is Lipoprotein-releasing system ATP-binding protein LolD.